We begin with the raw amino-acid sequence, 271 residues long: Short-chain dehydrogenase PC-15 (271 aa).

I8, T34, K40, D56, N84, Y148, K152, V181, and T183 together coordinate NADP(+). Y148 serves as the catalytic Proton acceptor. The active-site Lowers pKa of active site Tyr is the K152.

This sequence belongs to the short-chain dehydrogenases/reductases (SDR) family.

It functions in the pathway secondary metabolite biosynthesis. Functionally, short-chain dehydrogenase; part of the gene cluster that mediates the biosynthesis of the indole diterpenes penitrems. The geranylgeranyl diphosphate (GGPP) synthase penG catalyzes the first step in penitrem biosynthesis via conversion of farnesyl pyrophosphate and isopentyl pyrophosphate into geranylgeranyl pyrophosphate (GGPP). Condensation of indole-3-glycerol phosphate with GGPP by the prenyl transferase penC then forms 3-geranylgeranylindole (3-GGI). Epoxidation by the FAD-dependent monooxygenase penM leads to a epoxidized-GGI that is substrate of the terpene cyclase penB for cyclization to yield paspaline. Paspaline is subsequently converted to 13-desoxypaxilline by the cytochrome P450 monooxygenase penP, the latter being then converted to paxilline by the cytochrome P450 monooxygenase penQ. Paxilline is converted to beta-paxitriol via C-10 ketoreduction by the short-chain dehydrogenase PC-15 which can be monoprenylated at the C-20 by the indole diterpene prenyltransferase penD. A two-step elimination (acetylation and elimination) process performed by the O-acetyltransferase PC-16 and the P.simplicissimum ptmI-ortholog not yet identified in P.crustosum, leads to the production of the prenylated form of penijanthine. The FAD-linked oxidoreductase ptmO then converts the prenylated form of penijanthine into PC-M5 which is in turn transformed into PC-M4 by the aromatic dimethylallyltransferase PC-22. A series of oxidation steps involving 4 cytochrome P450 monooxygenases (PC-21, PC-05, PC-23, PC-20) and a FAD-dependent monooxygenase (PC-14) are required for the transformation of PC-M4 to penitrems A and E. Synthesis of these final products is proposed to proceed via penitrems D and C (PC-21, PC-05, PC-14) and penitrems B and F (PC-21, PC-05, PC-14, PC-23). The chain is Short-chain dehydrogenase PC-15 from Penicillium crustosum (Blue mold fungus).